We begin with the raw amino-acid sequence, 215 residues long: Serine acetyltransferase (215 aa).

The protein belongs to the transferase hexapeptide repeat family.

It is found in the cytoplasm. It catalyses the reaction L-serine + acetyl-CoA = O-acetyl-L-serine + CoA. It functions in the pathway amino-acid biosynthesis; L-cysteine biosynthesis; L-cysteine from L-serine: step 1/2. In Staphylococcus aureus (strain MRSA252), this protein is Serine acetyltransferase (cysE).